The following is a 347-amino-acid chain: NADH-ubiquinone oxidoreductase chain 2 (347 aa).

Transmembrane regions (helical) follow at residues 5–22 (ILTI…MVLI), 26–45 (WLTV…PILM), 60–80 (FLTQ…NLLL), 150–170 (NPNL…WGGL), 178–198 (ILAY…TYNP), 200–220 (LMML…MLFM), 242–262 (SLIL…GFIP), 274–294 (NMII…YFYM), and 324–344 (TLLP…PMML).

The protein belongs to the complex I subunit 2 family. Core subunit of respiratory chain NADH dehydrogenase (Complex I) which is composed of 45 different subunits. Interacts with TMEM242.

The protein resides in the mitochondrion inner membrane. The enzyme catalyses a ubiquinone + NADH + 5 H(+)(in) = a ubiquinol + NAD(+) + 4 H(+)(out). Functionally, core subunit of the mitochondrial membrane respiratory chain NADH dehydrogenase (Complex I) which catalyzes electron transfer from NADH through the respiratory chain, using ubiquinone as an electron acceptor. Essential for the catalytic activity and assembly of complex I. The chain is NADH-ubiquinone oxidoreductase chain 2 from Martes flavigula (Yellow-throated marten).